We begin with the raw amino-acid sequence, 84 residues long: Small ribosomal subunit protein uS17 (84 aa).

The protein belongs to the universal ribosomal protein uS17 family. As to quaternary structure, part of the 30S ribosomal subunit.

Functionally, one of the primary rRNA binding proteins, it binds specifically to the 5'-end of 16S ribosomal RNA. In Blochmanniella pennsylvanica (strain BPEN), this protein is Small ribosomal subunit protein uS17.